A 394-amino-acid chain; its full sequence is uncharacterized protein (394 aa).

A run of 12 helical transmembrane segments spans residues 13–35, 50–72, 79–97, 107–129, 136–158, 168–190, 218–240, 250–272, 277–299, 309–331, 344–366, and 371–393; these read AIIG…VPVL, VGVA…GWLS, LIIN…IAWS, GRGL…ELVL, IMGL…SPII, FLIN…PASL, INLS…PVEL, VPEI…CICF, VLYS…GIFL, ILGL…ALVN, AIYS…ILFS, and FEVL…LYLI.

The protein belongs to the major facilitator superfamily.

Its subcellular location is the cell membrane. This is an uncharacterized protein from Buchnera aphidicola subsp. Baizongia pistaciae (strain Bp).